The primary structure comprises 465 residues: Cysteine--tRNA ligase (465 aa).

C29 lines the Zn(2+) pocket. Positions 31–41 match the 'HIGH' region motif; that stretch reads PTVYNYIHIGN. Residues C209, H234, and E238 each coordinate Zn(2+). The short motif at 266–270 is the 'KMSKS' region element; the sequence is KMSKS. K269 contributes to the ATP binding site. Position 270 is a phosphoserine (S270).

This sequence belongs to the class-I aminoacyl-tRNA synthetase family. As to quaternary structure, monomer. Zn(2+) is required as a cofactor.

It localises to the cytoplasm. The catalysed reaction is tRNA(Cys) + L-cysteine + ATP = L-cysteinyl-tRNA(Cys) + AMP + diphosphate. The polypeptide is Cysteine--tRNA ligase (Bacillus cereus (strain 03BB102)).